The sequence spans 388 residues: Glutamine transporter 2 (388 aa).

The next 11 membrane-spanning stretches (helical) occupy residues 5-27 (LFGS…IPMV), 31-53 (FGLF…AALL), 86-106 (LFYL…ADLI), 121-141 (FAQV…TQII), 147-167 (LLFF…IPGM), 186-206 (TSTI…LVAY), 218-238 (MVIL…YAVV), 268-288 (IILS…VAMA), 302-322 (IVTY…AADQ), 326-346 (VLGY…LAMV), and 368-388 (GGKL…ISQI).

It belongs to the amino acid/polyamine transporter 2 family.

It is found in the cell inner membrane. Its function is as follows. Seems to be involved in glutamine transport. Complements an E.coli glnP deletion mutant. The polypeptide is Glutamine transporter 2 (Aliivibrio fischeri (strain ATCC 700601 / ES114) (Vibrio fischeri)).